An 839-amino-acid polypeptide reads, in one-letter code: Probable beta-glucosidase I (839 aa).

A glycan (N-linked (GlcNAc...) asparagine) is linked at Asn197. Asp225 is an active-site residue. The 161-residue stretch at 396 to 556 (DGKTGFKFRV…TQEELISKAV (161 aa)) folds into the PA14 domain. Asn494 is a glycosylation site (N-linked (GlcNAc...) asparagine).

Belongs to the glycosyl hydrolase 3 family.

The protein resides in the secreted. It catalyses the reaction Hydrolysis of terminal, non-reducing beta-D-glucosyl residues with release of beta-D-glucose.. It functions in the pathway glycan metabolism; cellulose degradation. In terms of biological role, beta-glucosidases are one of a number of cellulolytic enzymes, and catalyze the last step releasing glucose from the inhibitory cellobiose. This Emericella nidulans (strain FGSC A4 / ATCC 38163 / CBS 112.46 / NRRL 194 / M139) (Aspergillus nidulans) protein is Probable beta-glucosidase I (bglI).